The primary structure comprises 401 residues: MRRSFLISAALGLSMSTPALAASIQSVLGYLRPTSHHHAPCADDVVLKQSAGSDSAAPDPLPSRVVHNWPNGTWIENISVRPNGNLLVSQSTPRGRVWQVKEPWLDEPKVELAYDFDEWVDRIIGIGETTPDKYVVVGSRFYSLDPQSSQVERTFCAMELDFTKGEKPSARLVARFPHANLLQSVSALPWDRSVVLISDQYLLHPRADWEDLTPGPGQIWRLDTKTGHHEIVMTNYAEMNTTYNHGLDVGINGIKIHGDHLYWINMDTGGAYRVRIDKYGYPTPLNAVPETLGVAEDALWDDFAMHGTRIGEESDDTTMFATSIVNLMAISPENGTIVPLAGVGTSEPMGFPGPTSAQFGRTEKDSHILYVTGKLFNVPPSIRDVVIQGWVRAIDTTGFHF.

Positions 1–21 are cleaved as a signal peptide; the sequence is MRRSFLISAALGLSMSTPALA. Asn-71, Asn-77, Asn-240, and Asn-334 each carry an N-linked (GlcNAc...) asparagine glycan.

Belongs to the eupF Diels-Alderase family.

It participates in secondary metabolite biosynthesis; terpenoid biosynthesis. In terms of biological role, putative hetero-Diels-Alderase; part of the gene cluster that mediates the biosynthesis of xenovulene A, an unusual meroterpenoid that has potent inhibitory effects on the human gamma-aminobutyrate A (GABAA) benzodiazepine receptor. The first step of xenovulene A biosynthesis is the biosynthesis of 3-methylorcinaldehyde performed by the non-reducing polyketide synthase aspks1. The salicylate hydroxylase asL1 then catalyzes the oxidative dearomatization of 3-methylorcinaldehyde to yield a dearomatized hydroxycyclohexadione. The 2-oxoglutarate-dependent dioxygenase asL3 further catalyzes the oxidative ring expansion to provide the first tropolone metabolite. The cytochrome P450 monooxygenase asR2 allows the synthesis of tropolone hemiacetal. In parallel, a previously unrecognised class of terpene cyclase, asR6, produces alpha-humulene from farnesylpyrophosphate (FPP). The putative Diels-Alderase asR5 probably catalyzes the formation of the tropolone-humulene skeleton by linking humulene and the polyketide moiety. Oxidative-ring contractions catalyzed by asL4 and asL6 then processively remove carbon atoms from the polyketide to yield xenovulene A. This chain is Putative hetero-Diels-Alderase asR5, found in Sarocladium schorii (Acremonium strictum (strain IMI 501407)).